A 328-amino-acid polypeptide reads, in one-letter code: GTP 3',8-cyclase (328 aa).

The 229-residue stretch at 1-229 (MNQVDYLRIS…ESQVRGAGPA (229 aa)) folds into the Radical SAM core domain. Arg8 contacts GTP. Residues Cys15 and Cys19 each contribute to the [4Fe-4S] cluster site. An S-adenosyl-L-methionine-binding site is contributed by Tyr21. Position 22 (Cys22) interacts with [4Fe-4S] cluster. Arg60 provides a ligand contact to GTP. Gly64 provides a ligand contact to S-adenosyl-L-methionine. Position 91 (Thr91) interacts with GTP. Residue Ser115 participates in S-adenosyl-L-methionine binding. Lys155 lines the GTP pocket. Met189 is a binding site for S-adenosyl-L-methionine. 2 residues coordinate [4Fe-4S] cluster: Cys252 and Cys255. A GTP-binding site is contributed by 257–259 (RMR). Cys269 is a [4Fe-4S] cluster binding site.

The protein belongs to the radical SAM superfamily. MoaA family. In terms of assembly, monomer and homodimer. [4Fe-4S] cluster is required as a cofactor.

The catalysed reaction is GTP + AH2 + S-adenosyl-L-methionine = (8S)-3',8-cyclo-7,8-dihydroguanosine 5'-triphosphate + 5'-deoxyadenosine + L-methionine + A + H(+). Its pathway is cofactor biosynthesis; molybdopterin biosynthesis. Functionally, catalyzes the cyclization of GTP to (8S)-3',8-cyclo-7,8-dihydroguanosine 5'-triphosphate. This is GTP 3',8-cyclase from Nostoc punctiforme (strain ATCC 29133 / PCC 73102).